A 327-amino-acid chain; its full sequence is Arabinose 5-phosphate isomerase KdsD (327 aa).

In terms of domain architecture, SIS spans 41–183 (ILENNRDKSR…AIALLKAKNF (143 aa)). Residues 74-75 (GT), H81, H87, 113-122 (GLLPMIKHLD), 147-149 (HVD), T221, and E273 each bind substrate. Residue H81 participates in Zn(2+) binding. Positions 209–268 (MRKGNEIPIVKPTDNIRKAILEISDKGVGNTLVAENNTLLGIFTDGDLRRMFEAESFNSQ) constitute a CBS 1 domain. A CBS 2 domain is found at 275–327 (MTKNPKSISKEEMAITALEKMEKYEITSLAVVDNGHNILGIVTMHDLIKLELR).

The protein belongs to the SIS family. GutQ/KpsF subfamily. Homotetramer.

It carries out the reaction D-arabinose 5-phosphate = D-ribulose 5-phosphate. It participates in carbohydrate biosynthesis; 3-deoxy-D-manno-octulosonate biosynthesis; 3-deoxy-D-manno-octulosonate from D-ribulose 5-phosphate: step 1/3. Its pathway is bacterial outer membrane biogenesis; lipopolysaccharide biosynthesis. With respect to regulation, inhibited by hydroxamates, mimicking the putative enediol reaction intermediate. Most potent inhibition, with an IC(50) of 0.7 uM, is obtained with the 4 carbon-based hydroxamate containing acetyl moieties. Functionally, involved in the biosynthesis of 3-deoxy-D-manno-octulosonate (KDO), a unique 8-carbon sugar component of lipopolysaccharides (LPSs). Catalyzes the reversible aldol-ketol isomerization between D-ribulose 5-phosphate (Ru5P) and D-arabinose 5-phosphate (A5P). The sequence is that of Arabinose 5-phosphate isomerase KdsD (kdsD) from Francisella tularensis subsp. tularensis (strain SCHU S4 / Schu 4).